The primary structure comprises 240 residues: Urease accessory protein UreD (240 aa).

It belongs to the UreD family. In terms of assembly, ureD, UreF and UreG form a complex that acts as a GTP-hydrolysis-dependent molecular chaperone, activating the urease apoprotein by helping to assemble the nickel containing metallocenter of UreC. The UreE protein probably delivers the nickel.

The protein localises to the cytoplasm. Required for maturation of urease via the functional incorporation of the urease nickel metallocenter. This is Urease accessory protein UreD from Granulibacter bethesdensis (strain ATCC BAA-1260 / CGDNIH1).